A 232-amino-acid chain; its full sequence is Chromosome partition protein MukE (232 aa).

The disordered stretch occupies residues 203-232 (HTKEPSQGSLLSEEDQEEQAQEEMTEEGEA). Acidic residues predominate over residues 214–232 (SEEDQEEQAQEEMTEEGEA).

It belongs to the MukE family. As to quaternary structure, interacts, and probably forms a ternary complex, with MukF and MukB. The complex formation is stimulated by calcium or magnesium.

It is found in the cytoplasm. The protein localises to the nucleoid. Its function is as follows. Involved in chromosome condensation, segregation and cell cycle progression. May participate in facilitating chromosome segregation by condensation DNA from both sides of a centrally located replisome during cell division. Probably acts via its interaction with MukB and MukF. This is Chromosome partition protein MukE from Vibrio parahaemolyticus serotype O3:K6 (strain RIMD 2210633).